The primary structure comprises 316 residues: 4-diphosphocytidyl-2-C-methyl-D-erythritol kinase (316 aa).

Residue lysine 23 is part of the active site. 108 to 118 (PVAGGMAGGSA) lines the ATP pocket. The active site involves aspartate 150.

The protein belongs to the GHMP kinase family. IspE subfamily.

It catalyses the reaction 4-CDP-2-C-methyl-D-erythritol + ATP = 4-CDP-2-C-methyl-D-erythritol 2-phosphate + ADP + H(+). It functions in the pathway isoprenoid biosynthesis; isopentenyl diphosphate biosynthesis via DXP pathway; isopentenyl diphosphate from 1-deoxy-D-xylulose 5-phosphate: step 3/6. Its function is as follows. Catalyzes the phosphorylation of the position 2 hydroxy group of 4-diphosphocytidyl-2C-methyl-D-erythritol. The chain is 4-diphosphocytidyl-2-C-methyl-D-erythritol kinase from Mycobacterium avium (strain 104).